Consider the following 607-residue polypeptide: ATP-dependent zinc metalloprotease FtsH 2 (607 aa).

Over 1 to 2 (MR) the chain is Cytoplasmic. The helical transmembrane segment at 3-23 (SLWIVLVLVLGSALLLQVMAA) threads the bilayer. The Periplasmic portion of the chain corresponds to 24 to 99 (SDDRIPYARF…PYTRVADELG (76 aa)). Residues 100–120 (LPPYLWLLLPLAGLAAMGHLA) traverse the membrane as a helical segment. Residues 121–607 (SRRATTAGTI…LREMVASGEA (487 aa)) are Cytoplasmic-facing. 195–202 (GPPGTGKT) provides a ligand contact to ATP. Position 418 (His-418) interacts with Zn(2+). Residue Glu-419 is part of the active site. His-422 and Asp-495 together coordinate Zn(2+).

This sequence in the central section; belongs to the AAA ATPase family. The protein in the C-terminal section; belongs to the peptidase M41 family. Homohexamer. The cofactor is Zn(2+).

It localises to the cell inner membrane. Acts as a processive, ATP-dependent zinc metallopeptidase for both cytoplasmic and membrane proteins. Plays a role in the quality control of integral membrane proteins. In Sorangium cellulosum (strain So ce56) (Polyangium cellulosum (strain So ce56)), this protein is ATP-dependent zinc metalloprotease FtsH 2.